The primary structure comprises 350 residues: Phosphotriesterase-related protein (350 aa).

Positions 22, 24, 169, 201, 230, and 298 each coordinate a divalent metal cation.

It belongs to the metallo-dependent hydrolases superfamily. Phosphotriesterase family. A divalent metal cation is required as a cofactor.

The chain is Phosphotriesterase-related protein from Drosophila yakuba (Fruit fly).